We begin with the raw amino-acid sequence, 119 residues long: NADH-quinone oxidoreductase subunit A (119 aa).

The next 3 helical transmembrane spans lie at 7-27 (FPVL…VSIG), 63-83 (LVAI…PWGV), and 88-108 (IGWP…LGFA).

It belongs to the complex I subunit 3 family. As to quaternary structure, NDH-1 is composed of 14 different subunits. Subunits NuoA, H, J, K, L, M, N constitute the membrane sector of the complex.

The protein resides in the cell inner membrane. It carries out the reaction a quinone + NADH + 5 H(+)(in) = a quinol + NAD(+) + 4 H(+)(out). Its function is as follows. NDH-1 shuttles electrons from NADH, via FMN and iron-sulfur (Fe-S) centers, to quinones in the respiratory chain. The immediate electron acceptor for the enzyme in this species is believed to be ubiquinone. Couples the redox reaction to proton translocation (for every two electrons transferred, four hydrogen ions are translocated across the cytoplasmic membrane), and thus conserves the redox energy in a proton gradient. This Paraburkholderia xenovorans (strain LB400) protein is NADH-quinone oxidoreductase subunit A.